A 223-amino-acid polypeptide reads, in one-letter code: Ribose-5-phosphate isomerase A (223 aa).

Substrate is bound by residues 26–29 (TGST), 82–85 (DGAD), and 95–98 (KGGG). The Proton acceptor role is filled by glutamate 104. Lysine 122 provides a ligand contact to substrate.

It belongs to the ribose 5-phosphate isomerase family. Homodimer.

It catalyses the reaction aldehydo-D-ribose 5-phosphate = D-ribulose 5-phosphate. It participates in carbohydrate degradation; pentose phosphate pathway; D-ribose 5-phosphate from D-ribulose 5-phosphate (non-oxidative stage): step 1/1. Functionally, catalyzes the reversible conversion of ribose-5-phosphate to ribulose 5-phosphate. In Streptococcus agalactiae serotype Ia (strain ATCC 27591 / A909 / CDC SS700), this protein is Ribose-5-phosphate isomerase A.